The chain runs to 339 residues: Glycerol-3-phosphate dehydrogenase [NAD(P)+] (339 aa).

Positions 15, 16, 36, and 110 each coordinate NADPH. Lys110, Gly139, and Thr141 together coordinate sn-glycerol 3-phosphate. Ala143 is an NADPH binding site. Positions 195, 248, 258, 259, and 260 each coordinate sn-glycerol 3-phosphate. Lys195 (proton acceptor) is an active-site residue. Arg259 serves as a coordination point for NADPH. Residues Val283 and Glu285 each coordinate NADPH.

Belongs to the NAD-dependent glycerol-3-phosphate dehydrogenase family.

The protein resides in the cytoplasm. The catalysed reaction is sn-glycerol 3-phosphate + NAD(+) = dihydroxyacetone phosphate + NADH + H(+). The enzyme catalyses sn-glycerol 3-phosphate + NADP(+) = dihydroxyacetone phosphate + NADPH + H(+). Its pathway is membrane lipid metabolism; glycerophospholipid metabolism. Its function is as follows. Catalyzes the reduction of the glycolytic intermediate dihydroxyacetone phosphate (DHAP) to sn-glycerol 3-phosphate (G3P), the key precursor for phospholipid synthesis. The protein is Glycerol-3-phosphate dehydrogenase [NAD(P)+] of Serratia proteamaculans (strain 568).